The primary structure comprises 88 residues: ATPase inhibitor mai-1, mitochondrial (88 aa).

Positions 1 to 18 (MSGSGSGSGAGHGGGSGG) are enriched in gly residues. Positions 1–41 (MSGSGSGSGAGHGGGSGGSIREAGGSLGMMGATREEEYFRR) are disordered. Residues 39-87 (FRRQQKDQLDNLKKKLEADMTQSQQEIRDHEKVLEQHQQRLKEIEKGHG) are a coiled coil.

It belongs to the ATPase inhibitor family. In terms of processing, does not seem to include a transit peptide.

It localises to the mitochondrion. In terms of biological role, thought to be a regulatory component of the ATP-synthesizing complex in the mitochondria. The protein is ATPase inhibitor mai-1, mitochondrial (mai-1) of Caenorhabditis elegans.